The sequence spans 327 residues: Zinc transport protein ZntB (327 aa).

Over 1–271 (MDVVAGKALQ…AMNRRTYTMS (271 aa)) the chain is Cytoplasmic. Residues 272 to 292 (LLAMVFLPTTFLTGLFGVNLG) form a helical membrane-spanning segment. Over 293–300 (GIPGNTDS) the chain is Periplasmic. A helical membrane pass occupies residues 301-321 (FGFATFCMMLVVLVLGVAWWL). Topologically, residues 322-327 (KHSKWL) are cytoplasmic.

It belongs to the CorA metal ion transporter (MIT) (TC 1.A.35) family.

The protein resides in the cell inner membrane. It carries out the reaction Zn(2+)(out) + H(+)(out) = Zn(2+)(in) + H(+)(in). Its function is as follows. Zinc transporter. Acts as a Zn(2+):proton symporter, which likely mediates zinc ion uptake. This is Zinc transport protein ZntB from Yersinia enterocolitica serotype O:8 / biotype 1B (strain NCTC 13174 / 8081).